Reading from the N-terminus, the 267-residue chain is Luciferase (267 aa).

Asn-4 is a glycosylation site (N-linked (GlcNAc...) asparagine). Residues 17–39 traverse the membrane as a helical segment; sequence LSSRSIAITCGVVLASAIAFPII.

This sequence belongs to the fungal luciferase family.

The protein resides in the membrane. The enzyme catalyses 3-hydroxyhispidin + O2 = (E)-caffeoylpyruvate + hnu + CO2. It catalyses the reaction 3-hydroxyhispidin + O2 = 4-[(E)-2-(3,4-dihydroxyphenyl)ethenyl]-1,7-dihydroxy-2,3,5-trioxabicyclo[2.2.2]oct-7-en-6-one. Luciferase; part of the gene cluster that mediates the fungal bioluminescence cycle. Uses the fungal luciferin 3-hydroxyhispidin as a substrate to produce an endoperoxide as a high-energy intermediate with decomposition that yields oxyluciferin (also known as caffeoylpyruvate) and light emission. The fungal bioluminescence cycle begins with the hispidin synthetase that catalyzes the formation of hispidin which is further hydroxylated by the hispidin-3-hydroxylase, yielding the fungal luciferin 3-hydroxyhispidin. The luciferase then produces an endoperoxide as a high-energy intermediate with decomposition that yields oxyluciferin and light emission. Oxyluciferin can be recycled to caffeic acid by caffeoylpyruvate hydrolase. This is Luciferase from Neonothopanus nambi (Agaricus nambi).